The following is a 339-amino-acid chain: MRIGVVNDMPMAVELLRRLVLSTGEHQVAWIATNGREAVEVCRRDLPDLILMDLAMPVMDGVEATRRIMAETPCSILLVTASIESNLADVYEAMGHGALDAVDIPSVGIEGNASSQSARLLTNKIATIGKLIGDAPTKAKRRMSRAAEPTPRRLIAIGASAGGPAAVAAVLSAFPVDFGGAIVLVQHLDAQFVPGLVDWLGQHTPLPIRPARERDSPQAGTVLVASSADHLVFKSVQQLGYTPSPKDNVYRPSVDVFFESAAQWWPGSVIGVLLTGMGRDGARGLRQLRDKGHLTIAQDRATSAVYGMPKAAADIGAAVDILPLSAIGSRIIEACERST.

In terms of domain architecture, Response regulatory spans 2-119; sequence RIGVVNDMPM…EGNASSQSAR (118 aa). Asp-53 bears the 4-aspartylphosphate mark. Residues 149-338 form the CheB-type methylesterase domain; sequence PTPRRLIAIG…SRIIEACERS (190 aa). Catalysis depends on residues Ser-160, His-187, and Asp-280.

This sequence belongs to the CheB family. Post-translationally, phosphorylated by CheA. Phosphorylation of the N-terminal regulatory domain activates the methylesterase activity.

It localises to the cytoplasm. It carries out the reaction [protein]-L-glutamate 5-O-methyl ester + H2O = L-glutamyl-[protein] + methanol + H(+). It catalyses the reaction L-glutaminyl-[protein] + H2O = L-glutamyl-[protein] + NH4(+). Involved in chemotaxis. Part of a chemotaxis signal transduction system that modulates chemotaxis in response to various stimuli. Catalyzes the demethylation of specific methylglutamate residues introduced into the chemoreceptors (methyl-accepting chemotaxis proteins or MCP) by CheR. Also mediates the irreversible deamidation of specific glutamine residues to glutamic acid. This chain is Protein-glutamate methylesterase/protein-glutamine glutaminase, found in Mesorhizobium japonicum (strain LMG 29417 / CECT 9101 / MAFF 303099) (Mesorhizobium loti (strain MAFF 303099)).